The following is a 108-amino-acid chain: Protein YcgL (108 aa).

Residues 12–96 (MFCVIYRSSK…PPEDLLKQHL (85 aa)) enclose the YcgL domain.

This is Protein YcgL from Escherichia coli (strain K12 / MC4100 / BW2952).